The sequence spans 3994 residues: Hybrid PKS-NRPs synthetase opdA (3994 aa).

The region spanning 6-442 (PEPIAIVGSS…GTNSHVILES (437 aa)) is the Ketosynthase family 3 (KS3) domain. Active-site for beta-ketoacyl synthase activity residues include Cys179, His316, and His362. The tract at residues 559–881 (VFTGQGAQWP…LKRDSNDVEA (323 aa)) is malonyl-CoA:ACP transacylase (MAT) domain. Positions 951-1085 (HELLGRRTHD…GRLIIHLGET (135 aa)) are N-terminal hotdog fold. Residues 951 to 1251 (HELLGRRTHD…SVKPMAPPTA (301 aa)) are dehydratase (DH) domain. The 302-residue stretch at 951-1252 (HELLGRRTHD…VKPMAPPTAE (302 aa)) folds into the PKS/mFAS DH domain. Catalysis depends on His983, which acts as the Proton acceptor; for dehydratase activity. The segment at 1100-1252 (LLSVDTDEGY…VKPMAPPTAE (153 aa)) is C-terminal hotdog fold. Asp1159 acts as the Proton donor; for dehydratase activity in catalysis. Residues 1292 to 1593 (DRVVLYYVQR…VDLAFHDLPD (302 aa)) form a methyltransferase (MT) domain region. Residues 2123–2297 (TYLMVGMAGG…ASIIHIGFVT (175 aa)) form a ketoreductase (KR) domain region. The 78-residue stretch at 2406–2483 (EAVEITQKAF…QICTNAAKQL (78 aa)) folds into the Carrier 1 domain. Ser2443 carries the O-(pantetheine 4'-phosphoryl)serine modification. Residues 2486–2575 (QKGGQEPSEQ…FDPDDRDYNP (90 aa)) are disordered. 2 stretches are compositionally biased toward polar residues: residues 2505–2514 (LHVSQGSLHT) and 2522–2546 (TETS…SVTD). Basic and acidic residues predominate over residues 2547–2556 (TVEKRDKGDI). Residues 2557 to 2570 (SVDEGPNEQFDPDD) are compositionally biased toward acidic residues. Residues 2582 to 3007 (RLSSGQSRIY…SNTYMTVAKI (426 aa)) form a condensation (C) domain region. The interval 3043-3436 (HETNREDLAI…DGSLVFLGRL (394 aa)) is adenylation (A) (KR) domain. The Carrier 2 domain maps to 3553-3630 (PKLSLRQSEL…KMTMLVDLER (78 aa)). O-(pantetheine 4'-phosphoryl)serine is present on Ser3590. The reductase (RED) domain stretch occupies residues 3679 to 3895 (TGATGFLGGS…FDFKKVEEVA (217 aa)).

In the C-terminal section; belongs to the NRP synthetase family. It depends on pantetheine 4'-phosphate as a cofactor.

Its pathway is secondary metabolite biosynthesis. Hybrid PKS-NRPS synthetase; part of the gene cluster that mediates the biosynthesis of oxopyrrolidines, polyketide-amino acid hybrid compounds with feature structures of tetramic acid. The polyketide chain is first assembled by the highly reducing PKS module of opdA using acetyl-CoA as the starter unit and five malonyl-CoA as the extender units. OpdC acts as trans-acting enoyl reductase and reduces the terminal alkenyl to alkane. The 17R in oxopyrrolidine A and 15R, 17S in oxopyrrolidine B are generated by non-stereospecific catalysis of the ketoreductase (KR) domain and enoyl reductases. Then the polyketides with specific configurations are transferred to the NRPS module of opdA and linked to L-tyrosine to form an amide bond. Finally, the oxopyrrolidines are offloaded through a Dieckmann cyclization catalyzed by the terminal D domain to give a tetramic acid moiety. The sequence is that of Hybrid PKS-NRPs synthetase opdA from Penicillium oxalicum (strain 114-2 / CGMCC 5302) (Penicillium decumbens).